A 149-amino-acid chain; its full sequence is UPF0260 protein PSPTO_3918 (149 aa).

This sequence belongs to the UPF0260 family.

The chain is UPF0260 protein PSPTO_3918 from Pseudomonas syringae pv. tomato (strain ATCC BAA-871 / DC3000).